The sequence spans 505 residues: DNA repair protein RadA (505 aa).

Residues 10–27 (CSACGADHAQWFGRCPKC) form a C4-type zinc finger. 107–114 (GDPGIGKS) provides a ligand contact to ATP. The RadA KNRFG motif motif lies at 281-285 (KNRFG). Positions 380–505 (DAYLSVAGGL…KIEEDLGKKD (126 aa)) are lon-protease-like. The disordered stretch occupies residues 485-505 (NTTDQGNGSEAKIEEDLGKKD). The segment covering 495 to 505 (AKIEEDLGKKD) has biased composition (basic and acidic residues).

Belongs to the RecA family. RadA subfamily.

DNA-dependent ATPase involved in processing of recombination intermediates, plays a role in repairing DNA breaks. Stimulates the branch migration of RecA-mediated strand transfer reactions, allowing the 3' invading strand to extend heteroduplex DNA faster. Binds ssDNA in the presence of ADP but not other nucleotides, has ATPase activity that is stimulated by ssDNA and various branched DNA structures, but inhibited by SSB. Does not have RecA's homology-searching function. This chain is DNA repair protein RadA, found in Synechocystis sp. (strain ATCC 27184 / PCC 6803 / Kazusa).